The following is a 259-amino-acid chain: Bisphosphoglycerate mutase (259 aa).

Ser2 carries the post-translational modification N-acetylserine. Substrate contacts are provided by residues 10 to 17, 23 to 24, Arg62, 89 to 92, Arg100, and 116 to 117; these read RHGEGQWN, CS, ERHY, and RR. The Tele-phosphohistidine intermediate role is filled by His11. Catalysis depends on Glu89, which acts as the Proton donor/acceptor. Thr122 carries the phosphothreonine modification. 189–190 lines the substrate pocket; it reads GN.

The protein belongs to the phosphoglycerate mutase family. BPG-dependent PGAM subfamily. In terms of assembly, homodimer. Expressed in red blood cells. Expressed in placenta (labyrinthine trophoblasts).

It catalyses the reaction (2R)-3-phospho-glyceroyl phosphate = (2R)-2,3-bisphosphoglycerate + H(+). The enzyme catalyses (2R)-2-phosphoglycerate = (2R)-3-phosphoglycerate. Its activity is regulated as follows. At alkaline pH BPGM favors the synthase reaction; however, at lower pH the phosphatase reaction is dominant. Inhibited by citrate. Plays a major role in regulating hemoglobin oxygen affinity by controlling the levels of its allosteric effector 2,3-bisphosphoglycerate (2,3-BPG). Also exhibits mutase (EC 5.4.2.11) activity. This Mus musculus (Mouse) protein is Bisphosphoglycerate mutase (Bpgm).